The following is a 1829-amino-acid chain: Protein TIC 214 (1829 aa).

Transmembrane regions (helical) follow at residues 18-38 (IINSVVVVGLYYGFMTTFSIG), 67-87 (FIAGQLMMFISIYYAPLHLAL), 90-110 (PHTITVLALPYLLFHFFWNNP), 127-147 (LSIQCVFLNNLIFQLFNHFLL), 174-194 (FVGWLIGHILFMKWVGLVLVW), and 224-244 (IFSILLFITCIYYLGRIPSPI). Positions 260–272 (RDVEIEKTFERGG) are enriched in basic and acidic residues. The segment at 260 to 301 (RDVEIEKTFERGGTKQGQEVSAEEDPSPSLFSEEKEDPDKIE) is disordered.

This sequence belongs to the TIC214 family. Part of the Tic complex.

The protein resides in the plastid. The protein localises to the chloroplast inner membrane. Functionally, involved in protein precursor import into chloroplasts. May be part of an intermediate translocation complex acting as a protein-conducting channel at the inner envelope. The sequence is that of Protein TIC 214 from Citrus sinensis (Sweet orange).